Here is an 802-residue protein sequence, read N- to C-terminus: Chondroitin sulfate synthase 1 (802 aa).

At 1-7 the chain is on the cytoplasmic side; it reads MAARGRR. Residues 8 to 28 form a helical; Signal-anchor for type II membrane protein membrane-spanning segment; that stretch reads AWLSVLLGLVLGFVLASRLVL. Residues 29–802 are Lumenal-facing; that stretch reads PRASELKRAG…SNNNGSVRTA (774 aa). Residues 34–82 form a disordered region; the sequence is LKRAGPRRRASPEGCRSGQAAASQAGGARGDARGAQLWPPGSDPDGGPR. Composition is skewed to low complexity over residues 49–59 and 66–78; these read RSGQAAASQAG and RGAQ…SDPD. N-linked (GlcNAc...) asparagine glycosylation is found at N189 and N623. Positions 633 and 747 each coordinate a divalent metal cation. N-linked (GlcNAc...) asparagine glycosylation is present at N796.

Belongs to the chondroitin N-acetylgalactosaminyltransferase family. Co(2+) serves as cofactor. Mn(2+) is required as a cofactor. It depends on Cd(2+) as a cofactor. In terms of tissue distribution, ubiquitous, with the highest levels in placenta. Detected at low levels in brain, heart, skeletal muscle, colon, thymus, spleen, kidney, liver, adrenal gland, mammary gland, stomach, small intestine, lung and peripheral blood leukocytes.

It is found in the golgi apparatus. It localises to the golgi stack membrane. The protein localises to the secreted. It carries out the reaction 3-O-(beta-D-GlcA-(1-&gt;3)-beta-D-GalNAc-(1-&gt;4)-beta-D-GlcA-(1-&gt;3)-beta-D-Gal-(1-&gt;3)-beta-D-Gal-(1-&gt;4)-beta-D-Xyl)-L-seryl-[protein] + UDP-N-acetyl-alpha-D-galactosamine = 3-O-(beta-D-GalNAc-(1-&gt;4)-beta-D-GlcA-(1-&gt;3)-beta-D-GalNAc-(1-&gt;4)-beta-D-GlcA-(1-&gt;3)-beta-D-Gal-(1-&gt;3)-beta-D-Gal-(1-&gt;4)-beta-D-Xyl)-L-seryl-[protein] + UDP + H(+). It catalyses the reaction 3-O-{beta-D-GlcA-(1-&gt;3)-[beta-D-GalNAc-(1-&gt;4)-beta-D-GlcA-(1-&gt;3)](n)-beta-D-GalNAc-(1-&gt;4)-beta-D-GlcA-(1-&gt;3)-beta-D-Gal-(1-&gt;3)-beta-D-Gal-(1-&gt;4)-beta-D-Xyl}-L-seryl-[protein] + UDP-N-acetyl-alpha-D-galactosamine = 3-O-{[beta-D-GalNAc-(1-&gt;4)-beta-D-GlcA-(1-&gt;3)](n+1)-beta-D-GalNAc-(1-&gt;4)-beta-D-GlcA-(1-&gt;3)-beta-D-Gal-(1-&gt;3)-beta-D-Gal-(1-&gt;4)-beta-D-Xyl}-L-seryl-[protein] + UDP + H(+). The enzyme catalyses 3-O-(beta-D-GalNAc-(1-&gt;4)-beta-D-GlcA-(1-&gt;3)-beta-D-Gal-(1-&gt;3)-beta-D-Gal-(1-&gt;4)-beta-D-Xyl)-L-seryl-[protein] + UDP-alpha-D-glucuronate = 3-O-(beta-D-GlcA-(1-&gt;3)-beta-D-GalNAc-(1-&gt;4)-beta-D-GlcA-(1-&gt;3)-beta-D-Gal-(1-&gt;3)-beta-D-Gal-(1-&gt;4)-beta-D-Xyl)-L-seryl-[protein] + UDP + H(+). The catalysed reaction is 3-O-{[beta-D-GalNAc-(1-&gt;4)-beta-D-GlcA-(1-&gt;3)](n)-beta-D-GalNAc-(1-&gt;4)-beta-D-GlcA-(1-&gt;3)-beta-D-Gal-(1-&gt;3)-beta-D-Gal-(1-&gt;4)-beta-D-Xyl}-L-seryl-[protein] + UDP-alpha-D-glucuronate = 3-O-{beta-D-GlcA-(1-&gt;3)-[beta-D-GalNAc-(1-&gt;4)-beta-D-GlcA-(1-&gt;3)](n)-beta-D-GalNAc-(1-&gt;4)-beta-D-GlcA-(1-&gt;3)-beta-D-Gal-(1-&gt;3)-beta-D-Gal-(1-&gt;4)-beta-D-Xyl}-L-seryl-[protein] + UDP + H(+). In terms of biological role, has both beta-1,3-glucuronic acid and beta-1,4-N-acetylgalactosamine transferase activity. Transfers glucuronic acid (GlcUA) from UDP-GlcUA and N-acetylgalactosamine (GalNAc) from UDP-GalNAc to the non-reducing end of the elongating chondroitin polymer. Involved in the negative control of osteogenesis likely through the modulation of NOTCH signaling. This Homo sapiens (Human) protein is Chondroitin sulfate synthase 1.